The following is a 153-amino-acid chain: UPF0756 membrane protein BCB4264_A4705 (153 aa).

4 consecutive transmembrane segments (helical) span residues 8 to 28 (FLFI…TVAI), 54 to 74 (LGVT…EIGF), 87 to 107 (WIAL…VQLL), and 117 to 137 (LVFG…GPLI).

This sequence belongs to the UPF0756 family.

The protein localises to the cell membrane. This Bacillus cereus (strain B4264) protein is UPF0756 membrane protein BCB4264_A4705.